The primary structure comprises 123 residues: Gamma-synuclein (123 aa).

2 tandem repeats follow at residues 20–30 (EKTKQGVTEAA) and 31–41 (EKTKEGVMYVG). The segment at 20-67 (EKTKQGVTEAAEKTKEGVMYVGTKTKENVVQSVTSVAEKTKEQANAVS) is 4 X 11 AA tandem repeats of [EGSA]-K-T-K-[EQ]-[GQ]-V-X(4). The 3; approximate repeat unit spans residues 42 to 56 (TKTKENVVQSVTSVA). Repeat unit 4 spans residues 57–67 (EKTKEQANAVS). 2 positions are modified to phosphoserine: Ser67 and Ser72. The disordered stretch occupies residues 91-123 (TTGVVRKEDLEPPAQDQEAKEQEENEEAKSGED). Residues 107–123 (QEAKEQEENEEAKSGED) show a composition bias toward basic and acidic residues. At Ser120 the chain carries Phosphoserine; by BARK1, CaMK2 and CK2.

Belongs to the synuclein family. As to quaternary structure, may be a centrosome-associated protein. Interacts with MYOC; affects its secretion and its aggregation. Post-translationally, phosphorylated. Phosphorylation by GRK5 appears to occur on residues distinct from the residue phosphorylated by other kinases. In terms of tissue distribution, highly expressed in brain, particularly in the substantia nigra. Also expressed in the corpus callosum, heart, skeletal muscle, ovary, testis, colon and spleen. Weak expression in pancreas, kidney and lung. Expressed predominantly in the cell bodies and axons of primary sensory neurons, sympathetic neurons and motoneurons.

Its subcellular location is the cytoplasm. It localises to the perinuclear region. The protein resides in the cytoskeleton. The protein localises to the microtubule organizing center. It is found in the centrosome. Its subcellular location is the spindle. Functionally, plays a role in neurofilament network integrity. May be involved in modulating axonal architecture during development and in the adult. In vitro, increases the susceptibility of neurofilament-H to calcium-dependent proteases. May also function in modulating the keratin network in skin. Activates the MAPK and Elk-1 signal transduction pathway. The sequence is that of Gamma-synuclein (Sncg) from Mus musculus (Mouse).